The following is a 361-amino-acid chain: Probable U3 small nucleolar RNA-associated protein 11 (361 aa).

Disordered regions lie at residues M1–K52, L200–T235, K262–L295, and R311–R361. Positions H17 to Q33 are enriched in basic residues. Basic and acidic residues-rich tracts occupy residues Q37–L46 and R217–G228. The segment covering D278–A287 has biased composition (acidic residues). A compositionally biased stretch (basic and acidic residues) spans R342–F352.

This sequence belongs to the UTP11 family. As to quaternary structure, component of the ribosomal small subunit (SSU) processome.

Its subcellular location is the nucleus. It localises to the nucleolus. Functionally, involved in nucleolar processing of pre-18S ribosomal RNA. The sequence is that of Probable U3 small nucleolar RNA-associated protein 11 from Leishmania major.